Here is a 144-residue protein sequence, read N- to C-terminus: Large ribosomal subunit protein uL15 (144 aa).

The disordered stretch occupies residues 1 to 44; that stretch reads MKLNELMPSEGSRTNRKRIGRGTSSGTGKTAGRGQKGQKARGKV. Positions 23-35 are enriched in gly residues; the sequence is TSSGTGKTAGRGQ.

This sequence belongs to the universal ribosomal protein uL15 family. In terms of assembly, part of the 50S ribosomal subunit.

In terms of biological role, binds to the 23S rRNA. The polypeptide is Large ribosomal subunit protein uL15 (Pediococcus pentosaceus (strain ATCC 25745 / CCUG 21536 / LMG 10740 / 183-1w)).